The primary structure comprises 162 residues: Putative 4-hydroxy-4-methyl-2-oxoglutarate aldolase (162 aa).

Residues 75 to 78 (GDML) and Arg97 each bind substrate. Position 98 (Asp98) interacts with a divalent metal cation.

It belongs to the class II aldolase/RraA-like family. As to quaternary structure, homotrimer. A divalent metal cation serves as cofactor.

It catalyses the reaction 4-hydroxy-4-methyl-2-oxoglutarate = 2 pyruvate. It carries out the reaction oxaloacetate + H(+) = pyruvate + CO2. Catalyzes the aldol cleavage of 4-hydroxy-4-methyl-2-oxoglutarate (HMG) into 2 molecules of pyruvate. Also contains a secondary oxaloacetate (OAA) decarboxylase activity due to the common pyruvate enolate transition state formed following C-C bond cleavage in the retro-aldol and decarboxylation reactions. This chain is Putative 4-hydroxy-4-methyl-2-oxoglutarate aldolase, found in Pseudomonas paraeruginosa (strain DSM 24068 / PA7) (Pseudomonas aeruginosa (strain PA7)).